The following is a 133-amino-acid chain: Large ribosomal subunit protein uL15 (133 aa).

The disordered stretch occupies residues 1-64 (MGLENLKPAK…QPLQRRLPKI (64 aa)).

This sequence belongs to the universal ribosomal protein uL15 family. Part of the 50S ribosomal subunit.

Functionally, binds to the 23S rRNA. The sequence is that of Large ribosomal subunit protein uL15 from Helicobacter pylori (strain G27).